Here is an 82-residue protein sequence, read N- to C-terminus: MVCIPCIVIPVLLWVYKKFLEPIVYPFISPIINRIWPRKAVQSASTSAKKEESNGTCKASGTSITNGSVSRGEEAVPDKKTD.

Residues 1–37 (MVCIPCIVIPVLLWVYKKFLEPIVYPFISPIINRIWP) are necessary for its localzation to the endoplasmic reticulum and lipid droplets. The tract at residues 46–82 (TSAKKEESNGTCKASGTSITNGSVSRGEEAVPDKKTD) is disordered. Residues 54–69 (NGTCKASGTSITNGSV) are compositionally biased toward polar residues. A compositionally biased stretch (basic and acidic residues) spans 71 to 82 (RGEEAVPDKKTD).

This sequence belongs to the UPF0729 family.

It is found in the endoplasmic reticulum. Its subcellular location is the lipid droplet. This Xenopus tropicalis (Western clawed frog) protein is UPF0729 protein C18orf32 homolog.